Reading from the N-terminus, the 441-residue chain is GTPase Der (441 aa).

2 consecutive EngA-type G domains span residues 4 to 168 and 177 to 352; these read PVVA…PEDI and IRIA…EQNS. Residues 10-17, 57-61, 121-124, 183-190, 230-234, and 295-298 each bind GTP; these read GRPNVGKS, DTGGI, NKVE, DTAGM, and NKWD. Positions 353–437 constitute a KH-like domain; it reads TRVATATLNT…PIRMIVRQKD (85 aa).

It belongs to the TRAFAC class TrmE-Era-EngA-EngB-Septin-like GTPase superfamily. EngA (Der) GTPase family. Associates with the 50S ribosomal subunit.

GTPase that plays an essential role in the late steps of ribosome biogenesis. The polypeptide is GTPase Der (Desulfitobacterium hafniense (strain Y51)).